The following is a 579-amino-acid chain: Trehalase (579 aa).

A signal peptide spans 1–15 (MRLFLLLVGLTTVIA). Asn-29 and Asn-58 each carry an N-linked (GlcNAc...) asparagine glycan. Residues Arg-161, 168-169 (WD), Asn-205, 214-216 (RSQ), 279-281 (RPE), and Gly-313 contribute to the substrate site. An N-linked (GlcNAc...) asparagine glycan is attached at Asn-205. Asp-315 acts as the Proton donor/acceptor in catalysis. Asn-331 carries an N-linked (GlcNAc...) asparagine glycan. The active-site Proton donor/acceptor is the Glu-513. Glu-528 is a binding site for substrate. The segment covering 560–569 (DASANNGQSN) has biased composition (polar residues). The segment at 560 to 579 (DASANNGQSNEESETDSKEK) is disordered.

This sequence belongs to the glycosyl hydrolase 37 family. In midgut and Malpighian tubules.

The protein localises to the basolateral cell membrane. It catalyses the reaction alpha,alpha-trehalose + H2O = alpha-D-glucose + beta-D-glucose. Functionally, involved in uptake of hemolymph trehalose into epithelial cells in the midgut of feeding larvae. The chain is Trehalase from Bombyx mori (Silk moth).